Consider the following 324-residue polypeptide: uncharacterized protein (324 aa).

The next 8 helical transmembrane spans lie at 5-24 (VIGI…NRAM), 39-61 (FIFM…PLLL), 68-90 (FYWI…FAAA), 95-117 (WLIA…LFYV), 130-152 (QKIP…LIQL), 162-179 (MLLF…AYPL), 199-218 (LGMT…YGWW), and 228-250 (TVQS…FWAT).

The protein resides in the cell membrane. This is an uncharacterized protein from Bacillus subtilis (strain 168).